The following is a 377-amino-acid chain: CaM kinase-like vesicle-associated protein (377 aa).

The region spanning 24 to 287 is the Protein kinase domain; that stretch reads YDLGQLIKTE…AADAISHEWI (264 aa). The tract at residues 324–377 is disordered; the sequence is MKRLRAPEQTDPGTPSPSKDSDKTPSMATPAPSPANTPAEGAPSLPCPSPDTTG. Over residues 347–362 the composition is skewed to low complexity; it reads TPSMATPAPSPANTPA. Residues 368–377 show a composition bias toward pro residues; sequence LPCPSPDTTG.

It belongs to the protein kinase superfamily. CAMK Ser/Thr protein kinase family. In terms of assembly, interacts with calmodulin, in the presence of calcium. It depends on Ca(2+) as a cofactor.

It localises to the cytoplasmic vesicle membrane. Its function is as follows. Does not appear to have detectable kinase activity. This is CaM kinase-like vesicle-associated protein (camkv) from Xenopus laevis (African clawed frog).